Here is a 451-residue protein sequence, read N- to C-terminus: Vitamin D3 receptor (451 aa).

The nuclear receptor DNA-binding region spans 44–112 (PRICGVCGDR…RLKRCVDIGM (69 aa)). Zn(2+) is bound by residues Cys47, Cys50, Cys64, Cys67, Cys83, Cys89, Cys99, and Cys102. NR C4-type zinc fingers lie at residues 47–67 (CGVC…CEGC) and 83–107 (CPFN…LKRC). Hinge regions lie at residues 113-149 (MKEF…KLSE) and 120-149 (DEEV…KLSE). The NR LBD domain occupies 150-447 (EQQKVIDTLL…LTPLVLEVFG (298 aa)). Ser261 is a calcitriol binding site. Positions 270–288 (KMIPGFRDLTAEDQIALLK) are interaction with coactivator LXXLL motif. The calcitriol site is built by Arg298, Ser302, His329, and His421. Residues 440–448 (PLVLEVFGN) carry the 9aaTAD motif.

Belongs to the nuclear hormone receptor family. NR1 subfamily. As to quaternary structure, homodimer in the absence of bound vitamin D3. Heterodimer with RXRA after vitamin D3 binding. As to expression, expressed in kidney and intestine.

The protein localises to the nucleus. Its subcellular location is the cytoplasm. Functionally, nuclear receptor for calcitriol, the active form of vitamin D3 which mediates the action of this vitamin on cells. Enters the nucleus upon vitamin D3 binding where it forms heterodimers with the retinoid X receptor/RXR. The VDR-RXR heterodimers bind to specific response elements on DNA and activate the transcription of vitamin D3-responsive target genes. Plays a central role in calcium homeostasis. Also functions as a receptor for the secondary bile acid lithocholic acid (LCA) and its metabolites. This chain is Vitamin D3 receptor (VDR), found in Gallus gallus (Chicken).